A 250-amino-acid chain; its full sequence is Indole-3-glycerol phosphate synthase (250 aa).

Belongs to the TrpC family.

The catalysed reaction is 1-(2-carboxyphenylamino)-1-deoxy-D-ribulose 5-phosphate + H(+) = (1S,2R)-1-C-(indol-3-yl)glycerol 3-phosphate + CO2 + H2O. It functions in the pathway amino-acid biosynthesis; L-tryptophan biosynthesis; L-tryptophan from chorismate: step 4/5. This chain is Indole-3-glycerol phosphate synthase, found in Metallosphaera sedula (strain ATCC 51363 / DSM 5348 / JCM 9185 / NBRC 15509 / TH2).